The chain runs to 550 residues: Hydroxylamine reductase (550 aa).

[4Fe-4S] cluster contacts are provided by C7, C10, C19, and C25. Hybrid [4Fe-2O-2S] cluster is bound by residues H244, E268, C312, C405, C433, C458, E493, and K495. C405 carries the cysteine persulfide modification.

It belongs to the HCP family. The cofactor is [4Fe-4S] cluster. Hybrid [4Fe-2O-2S] cluster is required as a cofactor.

It localises to the cytoplasm. It carries out the reaction A + NH4(+) + H2O = hydroxylamine + AH2 + H(+). Catalyzes the reduction of hydroxylamine to form NH(3) and H(2)O. This chain is Hydroxylamine reductase, found in Porphyromonas gingivalis (strain ATCC BAA-308 / W83).